Reading from the N-terminus, the 206-residue chain is Emopamil-binding protein-like (206 aa).

4 consecutive transmembrane segments (helical) span residues 10 to 30 (EAGS…ALGL), 42 to 62 (WVLA…GAFV), 101 to 121 (LEIL…YAIV), and 165 to 185 (LWVY…LLLW). In terms of domain architecture, EXPERA spans 39 to 184 (VERWVLAWLC…LWVLIPGLLL (146 aa)).

Belongs to the EBP family. In terms of assembly, homodimer.

The protein resides in the endoplasmic reticulum membrane. Its function is as follows. Does not possess sterol isomerase activity and does not bind sigma ligands. This chain is Emopamil-binding protein-like (Ebpl), found in Mus musculus (Mouse).